Consider the following 128-residue polypeptide: Holo-[acyl-carrier-protein] synthase (128 aa).

Mg(2+) is bound by residues Asp-8 and Glu-58.

Belongs to the P-Pant transferase superfamily. AcpS family. Requires Mg(2+) as cofactor.

The protein resides in the cytoplasm. It catalyses the reaction apo-[ACP] + CoA = holo-[ACP] + adenosine 3',5'-bisphosphate + H(+). Transfers the 4'-phosphopantetheine moiety from coenzyme A to a Ser of acyl-carrier-protein. The chain is Holo-[acyl-carrier-protein] synthase from Exiguobacterium sibiricum (strain DSM 17290 / CCUG 55495 / CIP 109462 / JCM 13490 / 255-15).